An 89-amino-acid polypeptide reads, in one-letter code: Small ribosomal subunit protein uS15 (89 aa).

It belongs to the universal ribosomal protein uS15 family. Part of the 30S ribosomal subunit. Forms a bridge to the 50S subunit in the 70S ribosome, contacting the 23S rRNA.

Its function is as follows. One of the primary rRNA binding proteins, it binds directly to 16S rRNA where it helps nucleate assembly of the platform of the 30S subunit by binding and bridging several RNA helices of the 16S rRNA. Forms an intersubunit bridge (bridge B4) with the 23S rRNA of the 50S subunit in the ribosome. This Streptococcus agalactiae serotype Ia (strain ATCC 27591 / A909 / CDC SS700) protein is Small ribosomal subunit protein uS15.